We begin with the raw amino-acid sequence, 462 residues long: Cysteine--tRNA ligase (462 aa).

A Zn(2+)-binding site is contributed by cysteine 28. The short motif at 30-40 (MTVYDYCHLGH) is the 'HIGH' region element. 3 residues coordinate Zn(2+): cysteine 209, histidine 234, and glutamate 238. Positions 266-270 (KMAKS) match the 'KMSKS' region motif. Residue lysine 269 participates in ATP binding.

The protein belongs to the class-I aminoacyl-tRNA synthetase family. In terms of assembly, monomer. Zn(2+) serves as cofactor.

Its subcellular location is the cytoplasm. It carries out the reaction tRNA(Cys) + L-cysteine + ATP = L-cysteinyl-tRNA(Cys) + AMP + diphosphate. The protein is Cysteine--tRNA ligase of Alkalilimnicola ehrlichii (strain ATCC BAA-1101 / DSM 17681 / MLHE-1).